An 87-amino-acid polypeptide reads, in one-letter code: U3-theraphotoxin-Hhn1a 7 (87 aa).

An N-terminal signal peptide occupies residues 1-24 (MVNMKASMFLTFAGLVLLFVVSYA). The propeptide occupies 25–52 (SESEEKEFPKEMLSSIFAVDNDFKQEER). 3 disulfides stabilise this stretch: Cys-54–Cys-67, Cys-61–Cys-72, and Cys-66–Cys-79.

It belongs to the neurotoxin 10 (Hwtx-1) family. 51 (Hntx-8) subfamily. Hntx-8 sub-subfamily. As to expression, expressed by the venom gland.

The protein resides in the secreted. In terms of biological role, ion channel inhibitor. This is U3-theraphotoxin-Hhn1a 7 from Cyriopagopus hainanus (Chinese bird spider).